The following is a 364-amino-acid chain: Anthranilate phosphoribosyltransferase (364 aa).

Positions 1-10 are enriched in polar residues; that stretch reads MTSGPSQPFP. The disordered stretch occupies residues 1–22; the sequence is MTSGPSQPFPSASGPDDGPSWP. Residues glycine 101, 104-105, threonine 109, 111-114, 129-137, and glycine 141 each bind 5-phospho-alpha-D-ribose 1-diphosphate; these read GD, NLST, and KHGNRAASS. Glycine 101 provides a ligand contact to anthranilate. Serine 113 contributes to the Mg(2+) binding site. Anthranilate is bound at residue asparagine 132. Arginine 187 serves as a coordination point for anthranilate. 2 residues coordinate Mg(2+): aspartate 245 and glutamate 246.

The protein belongs to the anthranilate phosphoribosyltransferase family. Homodimer. Requires Mg(2+) as cofactor.

It carries out the reaction N-(5-phospho-beta-D-ribosyl)anthranilate + diphosphate = 5-phospho-alpha-D-ribose 1-diphosphate + anthranilate. Its pathway is amino-acid biosynthesis; L-tryptophan biosynthesis; L-tryptophan from chorismate: step 2/5. Its function is as follows. Catalyzes the transfer of the phosphoribosyl group of 5-phosphorylribose-1-pyrophosphate (PRPP) to anthranilate to yield N-(5'-phosphoribosyl)-anthranilate (PRA). The sequence is that of Anthranilate phosphoribosyltransferase from Mycolicibacterium smegmatis (strain ATCC 700084 / mc(2)155) (Mycobacterium smegmatis).